The following is a 173-amino-acid chain: MTYFVVFLGLCFVLGGLAVASNPSPYYGVVGLVLASVVGCGWLLSLGVSFVSLVLFMVYLGGMLVVFVYSVSLAADPFPEAWGDWGVVGYGASFVVVLMVGGVIGGFVGGWDFGVVTVDSVGVFSARLDFSGVAMFYSCGVGMFLVAGWGLVLTLFVVLELVRGLSRGAIRAV.

The next 5 membrane-spanning stretches (helical) occupy residues 1 to 21 (MTYF…AVAS), 27 to 47 (YGVV…LSLG), 48 to 68 (VSFV…VVFV), 87 to 107 (VVGY…IGGF), and 139 to 159 (CGVG…FVVL).

It belongs to the complex I subunit 6 family.

The protein resides in the mitochondrion membrane. The enzyme catalyses a ubiquinone + NADH + 5 H(+)(in) = a ubiquinol + NAD(+) + 4 H(+)(out). Functionally, core subunit of the mitochondrial membrane respiratory chain NADH dehydrogenase (Complex I) that is believed to belong to the minimal assembly required for catalysis. Complex I functions in the transfer of electrons from NADH to the respiratory chain. The immediate electron acceptor for the enzyme is believed to be ubiquinone. The chain is NADH-ubiquinone oxidoreductase chain 6 (MT-ND6) from Cepphus columba (Pigeon guillemot).